Here is a 228-residue protein sequence, read N- to C-terminus: Ribulose-phosphate 3-epimerase (228 aa).

S12 is a binding site for substrate. A divalent metal cation contacts are provided by H37, D39, and H70. Residue D39 is the Proton acceptor of the active site. Residues H70, 146-149 (GFGG), 176-178 (DGG), and 198-199 (GS) contribute to the substrate site. Residue D176 coordinates a divalent metal cation. Residue D176 is the Proton donor of the active site.

Belongs to the ribulose-phosphate 3-epimerase family. The cofactor is a divalent metal cation.

It carries out the reaction D-ribulose 5-phosphate = D-xylulose 5-phosphate. Its pathway is carbohydrate degradation. Functionally, catalyzes the reversible epimerization of D-ribulose 5-phosphate to D-xylulose 5-phosphate. The sequence is that of Ribulose-phosphate 3-epimerase from Rhodobacter capsulatus (Rhodopseudomonas capsulata).